Consider the following 350-residue polypeptide: Nicotinate-nucleotide--dimethylbenzimidazole phosphoribosyltransferase (350 aa).

The active-site Proton acceptor is Glu-317.

The protein belongs to the CobT family.

The catalysed reaction is 5,6-dimethylbenzimidazole + nicotinate beta-D-ribonucleotide = alpha-ribazole 5'-phosphate + nicotinate + H(+). The protein operates within nucleoside biosynthesis; alpha-ribazole biosynthesis; alpha-ribazole from 5,6-dimethylbenzimidazole: step 1/2. In terms of biological role, catalyzes the synthesis of alpha-ribazole-5'-phosphate from nicotinate mononucleotide (NAMN) and 5,6-dimethylbenzimidazole (DMB). In Shewanella sp. (strain MR-7), this protein is Nicotinate-nucleotide--dimethylbenzimidazole phosphoribosyltransferase.